The sequence spans 623 residues: Regulatory solute carrier protein family 1 member 1 (623 aa).

Polar residues-rich tracts occupy residues 1-16, 83-99, and 133-144; these read MSSL…QAHP, CASS…PAIP, and EASLSVTTTRMQ. 4 disordered regions span residues 1-48, 71-99, 116-189, and 433-493; these read MSSL…PDSI, RKEQ…PAIP, SAEG…APHD, and EELT…PHCT. 3 stretches are compositionally biased toward basic and acidic residues: residues 150-159, 170-180, and 460-473; these read IGEKGWHPEY, QHEEPRNEQHE, and LVDK…RESV. The segment covering 474 to 491 has biased composition (polar residues); the sequence is NESSLVTLDSAKTSNQPH. Positions 577 to 617 constitute a UBA domain; the sequence is IFPAADIDRILRAGFTLQEALGALHRVGGNADLALLVLLAK.

Interacts with YRDC. As to expression, renal outer cortex and outer medulla, small intestine and liver.

Its subcellular location is the cell membrane. It is found in the nucleus. The protein localises to the golgi apparatus. It localises to the trans-Golgi network. Functionally, mediates transcriptional and post-transcriptional regulation of SLC5A1. Inhibits a dynamin and PKC-dependent exocytotic pathway of SLC5A1. Also involved in transcriptional regulation of SLC22A2. Exhibits glucose-dependent, short-term inhibition of SLC5A1 and SLC22A2 by inhibiting the release of vesicles from the trans-Golgi network. The sequence is that of Regulatory solute carrier protein family 1 member 1 (RSC1A1) from Sus scrofa (Pig).